Reading from the N-terminus, the 150-residue chain is Large ribosomal subunit protein bL9 (150 aa).

Belongs to the bacterial ribosomal protein bL9 family.

Its function is as follows. Binds to the 23S rRNA. This is Large ribosomal subunit protein bL9 from Limosilactobacillus fermentum (strain NBRC 3956 / LMG 18251) (Lactobacillus fermentum).